The chain runs to 261 residues: Imidazole glycerol phosphate synthase subunit HisF (261 aa).

Active-site residues include Asp12 and Asp131.

Belongs to the HisA/HisF family. As to quaternary structure, heterodimer of HisH and HisF.

Its subcellular location is the cytoplasm. It carries out the reaction 5-[(5-phospho-1-deoxy-D-ribulos-1-ylimino)methylamino]-1-(5-phospho-beta-D-ribosyl)imidazole-4-carboxamide + L-glutamine = D-erythro-1-(imidazol-4-yl)glycerol 3-phosphate + 5-amino-1-(5-phospho-beta-D-ribosyl)imidazole-4-carboxamide + L-glutamate + H(+). It functions in the pathway amino-acid biosynthesis; L-histidine biosynthesis; L-histidine from 5-phospho-alpha-D-ribose 1-diphosphate: step 5/9. Functionally, IGPS catalyzes the conversion of PRFAR and glutamine to IGP, AICAR and glutamate. The HisF subunit catalyzes the cyclization activity that produces IGP and AICAR from PRFAR using the ammonia provided by the HisH subunit. This is Imidazole glycerol phosphate synthase subunit HisF from Brucella abortus (strain S19).